A 430-amino-acid polypeptide reads, in one-letter code: Protein translocase subunit SecY (430 aa).

The next 10 membrane-spanning stretches (helical) occupy residues 18–38 (IFFT…PAPG), 68–88 (FSIF…MQLL), 117–137 (FAII…NNYL), 148–168 (MSYL…LWLG), 179–199 (GISI…LIQF), 215–235 (LQVA…VYVL), 270–290 (VIPV…TMFF), 308–328 (NIGM…YAFV), 368–388 (FVGS…TKFM), and 390–410 (LPQS…VAIE).

The protein belongs to the SecY/SEC61-alpha family. As to quaternary structure, component of the Sec protein translocase complex. Heterotrimer consisting of SecY, SecE and SecG subunits. The heterotrimers can form oligomers, although 1 heterotrimer is thought to be able to translocate proteins. Interacts with the ribosome. Interacts with SecDF, and other proteins may be involved. Interacts with SecA.

The protein localises to the cell membrane. Its function is as follows. The central subunit of the protein translocation channel SecYEG. Consists of two halves formed by TMs 1-5 and 6-10. These two domains form a lateral gate at the front which open onto the bilayer between TMs 2 and 7, and are clamped together by SecE at the back. The channel is closed by both a pore ring composed of hydrophobic SecY resides and a short helix (helix 2A) on the extracellular side of the membrane which forms a plug. The plug probably moves laterally to allow the channel to open. The ring and the pore may move independently. This chain is Protein translocase subunit SecY, found in Staphylococcus carnosus (strain TM300).